The following is a 179-amino-acid chain: Arginine repressor (179 aa).

This sequence belongs to the ArgR family.

The protein resides in the cytoplasm. It participates in amino-acid biosynthesis; L-arginine biosynthesis [regulation]. Its function is as follows. Regulates arginine biosynthesis genes. The polypeptide is Arginine repressor (Renibacterium salmoninarum (strain ATCC 33209 / DSM 20767 / JCM 11484 / NBRC 15589 / NCIMB 2235)).